Reading from the N-terminus, the 1191-residue chain is DNA-directed RNA polymerase subunit beta (1191 aa).

Over residues 1171–1181 (RVKQEAEEKQA) the composition is skewed to basic and acidic residues. The interval 1171–1191 (RVKQEAEEKQAEQVSEVVQED) is disordered. Residues 1182–1191 (EQVSEVVQED) are compositionally biased toward low complexity.

It belongs to the RNA polymerase beta chain family. As to quaternary structure, the RNAP catalytic core consists of 2 alpha, 1 beta, 1 beta' and 1 omega subunit. When a sigma factor is associated with the core the holoenzyme is formed, which can initiate transcription.

It carries out the reaction RNA(n) + a ribonucleoside 5'-triphosphate = RNA(n+1) + diphosphate. DNA-dependent RNA polymerase catalyzes the transcription of DNA into RNA using the four ribonucleoside triphosphates as substrates. The sequence is that of DNA-directed RNA polymerase subunit beta from Streptococcus agalactiae serotype Ia (strain ATCC 27591 / A909 / CDC SS700).